The following is a 385-amino-acid chain: Multidrug resistance protein MdtE (385 aa).

The N-terminal stretch at 1–20 (MNRRRKLLIPLLFCGAMLTA) is a signal peptide. C21 carries the N-palmitoyl cysteine lipid modification. A lipid anchor (S-diacylglycerol cysteine) is attached at C21.

It belongs to the membrane fusion protein (MFP) (TC 8.A.1) family. In terms of assembly, homotrimer. Part of the tripartite efflux system MdtEF-TolC, which is composed of an inner membrane transporter, MdtF, a membrane fusion protein, MdtE, and an outer membrane component, TolC. The complex forms a large protein conduit and can translocate molecules across both the inner and outer membranes.

It localises to the cell inner membrane. Functionally, part of the tripartite efflux system MdtEF-TolC, which confers resistance to various compounds. The chain is Multidrug resistance protein MdtE (mdtE) from Escherichia coli O157:H7.